Reading from the N-terminus, the 145-residue chain is D-aminoacyl-tRNA deacylase (145 aa).

The Gly-cisPro motif, important for rejection of L-amino acids signature appears at 137-138; that stretch reads GP.

The protein belongs to the DTD family. In terms of assembly, homodimer.

It localises to the cytoplasm. It catalyses the reaction glycyl-tRNA(Ala) + H2O = tRNA(Ala) + glycine + H(+). It carries out the reaction a D-aminoacyl-tRNA + H2O = a tRNA + a D-alpha-amino acid + H(+). Its function is as follows. An aminoacyl-tRNA editing enzyme that deacylates mischarged D-aminoacyl-tRNAs. Also deacylates mischarged glycyl-tRNA(Ala), protecting cells against glycine mischarging by AlaRS. Acts via tRNA-based rather than protein-based catalysis; rejects L-amino acids rather than detecting D-amino acids in the active site. By recycling D-aminoacyl-tRNA to D-amino acids and free tRNA molecules, this enzyme counteracts the toxicity associated with the formation of D-aminoacyl-tRNA entities in vivo and helps enforce protein L-homochirality. The polypeptide is D-aminoacyl-tRNA deacylase (Photorhabdus laumondii subsp. laumondii (strain DSM 15139 / CIP 105565 / TT01) (Photorhabdus luminescens subsp. laumondii)).